Consider the following 213-residue polypeptide: rRNA N(6)-adenosine-methyltransferase Mettl5 (213 aa).

Residues Gln-28, Thr-31, Gly-59, Cys-62, and 108 to 109 each bind S-adenosyl-L-methionine; that span reads DV.

This sequence belongs to the methyltransferase superfamily. PrmA family. As to quaternary structure, heterodimer; heterodimerizes with Trmt112. Enriched in the brain.

Its subcellular location is the cytoplasm. It carries out the reaction adenosine in rRNA + S-adenosyl-L-methionine = N(6)-methyladenosine in rRNA + S-adenosyl-L-homocysteine + H(+). Catalytic subunit of a heterodimer with Trmt112, which specifically methylates the 6th position of adenine in 18S rRNA. In Drosophila melanogaster (Fruit fly), this protein is rRNA N(6)-adenosine-methyltransferase Mettl5.